Reading from the N-terminus, the 155-residue chain is NADH-ubiquinone oxidoreductase chain 6 (155 aa).

The next 4 helical transmembrane spans lie at 10 to 30 (ILAIGLLSPVQSIVCLIVLFV), 43 to 63 (LMGILYVLIYVGAIAILFLFI), 75 to 95 (GTIHPLIFTILIICLIPLDLS), and 133 to 153 (AIPMILIGLILILSVIGAIAI).

The protein belongs to the complex I subunit 6 family.

The protein resides in the mitochondrion membrane. It catalyses the reaction a ubiquinone + NADH + 5 H(+)(in) = a ubiquinol + NAD(+) + 4 H(+)(out). Core subunit of the mitochondrial membrane respiratory chain NADH dehydrogenase (Complex I) that is believed to belong to the minimal assembly required for catalysis. Complex I functions in the transfer of electrons from NADH to the respiratory chain. The immediate electron acceptor for the enzyme is believed to be ubiquinone. In Candida parapsilosis (Yeast), this protein is NADH-ubiquinone oxidoreductase chain 6 (ND6).